A 355-amino-acid chain; its full sequence is MDFIFHEKQEGFLCAQHCLNNLLQGEYFSPVELASIAHQLDEEERMRMAEGGVTSEEYLAFLQQPSENMDDTGFFSIQVISNALKFWGLEIIHFNNPEYQKLGIDPINERSFICNYKQHWFTIRKFGKHWFNLNSLLAGPELISDTCLANFLARLQQQAYSVFVVKGDLPDCEADQLLQIISVEEMDTPKLNGKKLVKQKEHRVYKTVLEKVSEESDESGTSDQDEEDFQRALELSRQETNREDEHLRSTIELSMQGSSGNTSQDLPKTSCVTPASEQPKKIKEDYFEKHQQEQKQQQQQSDLPGHSSYLHERPTTSSRAIESDLSDDISEGTVQAAVDTILEIMRKNLKIKGEK.

Residues 1-180 (MDFIFHEKQE…DCEADQLLQI (180 aa)) form the Josephin domain. Cys-14 (nucleophile) is an active-site residue. His-119 serves as the catalytic Proton acceptor. Asn-134 is a catalytic residue. Disordered regions lie at residues 209 to 230 (LEKV…EDFQ) and 253 to 331 (LSMQ…DISE). The span at 215-228 (ESDESGTSDQDEED) shows a compositional bias: acidic residues. 2 consecutive UIM domains span residues 224–243 (QDEE…TNRE) and 244–258 (DEHL…MQGS). Residues 253 to 276 (LSMQGSSGNTSQDLPKTSCVTPAS) are compositionally biased toward polar residues. A compositionally biased stretch (basic and acidic residues) spans 278-293 (QPKKIKEDYFEKHQQE).

Widely expressed.

It localises to the nucleus. It catalyses the reaction Thiol-dependent hydrolysis of ester, thioester, amide, peptide and isopeptide bonds formed by the C-terminal Gly of ubiquitin (a 76-residue protein attached to proteins as an intracellular targeting signal).. Its function is as follows. Deubiquitinating enzyme that cleaves both 'Lys-48'-linked and 'Lys-63'-linked poly-ubiquitin chains (in vitro). Acts as a deubiquitinating enzyme for the transcription factor KLF5, playing a role in the regulation of KLF5 stability. In Homo sapiens (Human), this protein is Ataxin-3-like protein.